A 351-amino-acid chain; its full sequence is uncharacterized protein (351 aa).

An N-terminal signal peptide occupies residues 1 to 27; that stretch reads MKNKKRVLIASSLSCAILLLSAATTQA. A disordered region spans residues 29–71; sequence SAHKDSQDQNKKEHVDKSQQKDKRNVTNKDKNSTVPDDIGKNG. The segment covering 30–60 has biased composition (basic and acidic residues); that stretch reads AHKDSQDQNKKEHVDKSQQKDKRNVTNKDKN.

The protein belongs to the aerolysin family.

This is an uncharacterized protein from Staphylococcus aureus (strain Mu50 / ATCC 700699).